Here is a 33-residue protein sequence, read N- to C-terminus: Brevinin-2CDYb (33 aa).

The cysteines at positions 27 and 33 are disulfide-linked.

It belongs to the frog skin active peptide (FSAP) family. Brevinin subfamily. Expressed by the skin glands.

The protein resides in the secreted. Antimicrobial peptide. This chain is Brevinin-2CDYb, found in Rana dybowskii (Dybovsky's frog).